Here is a 221-residue protein sequence, read N- to C-terminus: Factor arrest protein 7 (221 aa).

Component of a complex at least composed of FAR3, FAR7, FAR8, FAR10, FAR11 and VPS64.

Participates in the control of the reentry into the cell cycle following pheromone treatment. This is Factor arrest protein 7 (FAR7) from Saccharomyces cerevisiae (strain ATCC 204508 / S288c) (Baker's yeast).